Consider the following 597-residue polypeptide: uncharacterized protein (597 aa).

The region spanning 48–198 (LHPYNPYSSL…DSILSLTKET (151 aa)) is the Helicase ATP-binding domain. An ATP-binding site is contributed by 61–68 (YDVGLGKT). A DEVH box motif is present at residues 146–149 (DEVH). A Helicase C-terminal domain is found at 275 to 467 (KINAFINSIK…DIPKIDNEMV (193 aa)).

Belongs to the helicase family.

Functionally, the presence of the two linear plasmids, termed pGKL1 and pGKL2, in strains of Kluyveromyces lactis confers the killer phenotype to the host cell, by promoting the secretion of a toxin able to inhibit the growth of sensitive strains. This is an uncharacterized protein from Kluyveromyces lactis (strain ATCC 8585 / CBS 2359 / DSM 70799 / NBRC 1267 / NRRL Y-1140 / WM37) (Yeast).